Here is a 670-residue protein sequence, read N- to C-terminus: UvrABC system protein B (670 aa).

The region spanning 26–414 (EGLEDGLAHQ…GGDVIDQVVR (389 aa)) is the Helicase ATP-binding domain. An ATP-binding site is contributed by 39-46 (GVTGSGKT). The Beta-hairpin signature appears at 92 to 115 (YYDYYQPEAYVPSSDTFIEKDASV). The region spanning 431–597 (QVDDLLSEIR…GINKKISDIL (167 aa)) is the Helicase C-terminal domain. Residues 630-665 (ELKIRELESKMLTHAQNLEFEEAAALRDEVQVLRAQ) form the UVR domain.

The protein belongs to the UvrB family. Forms a heterotetramer with UvrA during the search for lesions. Interacts with UvrC in an incision complex.

It localises to the cytoplasm. In terms of biological role, the UvrABC repair system catalyzes the recognition and processing of DNA lesions. A damage recognition complex composed of 2 UvrA and 2 UvrB subunits scans DNA for abnormalities. Upon binding of the UvrA(2)B(2) complex to a putative damaged site, the DNA wraps around one UvrB monomer. DNA wrap is dependent on ATP binding by UvrB and probably causes local melting of the DNA helix, facilitating insertion of UvrB beta-hairpin between the DNA strands. Then UvrB probes one DNA strand for the presence of a lesion. If a lesion is found the UvrA subunits dissociate and the UvrB-DNA preincision complex is formed. This complex is subsequently bound by UvrC and the second UvrB is released. If no lesion is found, the DNA wraps around the other UvrB subunit that will check the other stand for damage. The chain is UvrABC system protein B from Pectobacterium atrosepticum (strain SCRI 1043 / ATCC BAA-672) (Erwinia carotovora subsp. atroseptica).